Reading from the N-terminus, the 334-residue chain is Holliday junction branch migration complex subunit RuvB (334 aa).

Positions 1–182 (MDERLVSSEA…FGVLSRLEYY (182 aa)) are large ATPase domain (RuvB-L). ATP-binding positions include Leu21, Arg22, Gly63, Lys66, Thr67, Thr68, 129-131 (EDF), Arg172, Tyr182, and Arg219. A Mg(2+)-binding site is contributed by Thr67. The segment at 183–253 (TQEELTDIVS…IAHDALERLQ (71 aa)) is small ATPAse domain (RuvB-S). The segment at 256–334 (ALGLDHIDHK…HFRLEAPARD (79 aa)) is head domain (RuvB-H). Arg311 and Arg316 together coordinate DNA.

It belongs to the RuvB family. Homohexamer. Forms an RuvA(8)-RuvB(12)-Holliday junction (HJ) complex. HJ DNA is sandwiched between 2 RuvA tetramers; dsDNA enters through RuvA and exits via RuvB. An RuvB hexamer assembles on each DNA strand where it exits the tetramer. Each RuvB hexamer is contacted by two RuvA subunits (via domain III) on 2 adjacent RuvB subunits; this complex drives branch migration. In the full resolvosome a probable DNA-RuvA(4)-RuvB(12)-RuvC(2) complex forms which resolves the HJ.

Its subcellular location is the cytoplasm. The enzyme catalyses ATP + H2O = ADP + phosphate + H(+). Functionally, the RuvA-RuvB-RuvC complex processes Holliday junction (HJ) DNA during genetic recombination and DNA repair, while the RuvA-RuvB complex plays an important role in the rescue of blocked DNA replication forks via replication fork reversal (RFR). RuvA specifically binds to HJ cruciform DNA, conferring on it an open structure. The RuvB hexamer acts as an ATP-dependent pump, pulling dsDNA into and through the RuvAB complex. RuvB forms 2 homohexamers on either side of HJ DNA bound by 1 or 2 RuvA tetramers; 4 subunits per hexamer contact DNA at a time. Coordinated motions by a converter formed by DNA-disengaged RuvB subunits stimulates ATP hydrolysis and nucleotide exchange. Immobilization of the converter enables RuvB to convert the ATP-contained energy into a lever motion, pulling 2 nucleotides of DNA out of the RuvA tetramer per ATP hydrolyzed, thus driving DNA branch migration. The RuvB motors rotate together with the DNA substrate, which together with the progressing nucleotide cycle form the mechanistic basis for DNA recombination by continuous HJ branch migration. Branch migration allows RuvC to scan DNA until it finds its consensus sequence, where it cleaves and resolves cruciform DNA. In Bacillus velezensis (strain DSM 23117 / BGSC 10A6 / LMG 26770 / FZB42) (Bacillus amyloliquefaciens subsp. plantarum), this protein is Holliday junction branch migration complex subunit RuvB.